The following is a 631-amino-acid chain: ATP-dependent zinc metalloprotease FtsH (631 aa).

Over 1–2 (MK) the chain is Stromal. Residues 3-23 (ISWKNILLTLIPLGLISFLVW) traverse the membrane as a helical segment. The Lumenal portion of the chain corresponds to 24-118 (QGFNNTTNPQ…AHATNDSTPA (95 aa)). The chain crosses the membrane as a helical span at residues 119–139 (WSLIGNLIFPILLIAGLAFLF). Residues 140–631 (RRSSNLPGGP…IDYKSQLKST (492 aa)) lie on the Stromal side of the membrane. 213–220 (GPPGTGKT) contacts ATP. A Zn(2+)-binding site is contributed by histidine 434. The active site involves glutamate 435. 2 residues coordinate Zn(2+): histidine 438 and aspartate 512.

It in the central section; belongs to the AAA ATPase family. This sequence in the C-terminal section; belongs to the peptidase M41 family. Homohexamer. Requires Zn(2+) as cofactor.

The protein localises to the plastid. Its subcellular location is the chloroplast thylakoid membrane. Acts as a processive, ATP-dependent zinc metallopeptidase. This Guillardia theta (Cryptophyte) protein is ATP-dependent zinc metalloprotease FtsH.